The following is a 215-amino-acid chain: 2-phospho-L-lactate guanylyltransferase (215 aa).

This sequence belongs to the CofC family. As to quaternary structure, homodimer.

The enzyme catalyses (2S)-2-phospholactate + GTP + H(+) = (2S)-lactyl-2-diphospho-5'-guanosine + diphosphate. It participates in cofactor biosynthesis; coenzyme F420 biosynthesis. Its function is as follows. Guanylyltransferase that catalyzes the activation of (2S)-2-phospholactate (2-PL) as (2S)-lactyl-2-diphospho-5'-guanosine, via the condensation of 2-PL with GTP. It is involved in the biosynthesis of coenzyme F420, a hydride carrier cofactor. This is 2-phospho-L-lactate guanylyltransferase from Methanoculleus marisnigri (strain ATCC 35101 / DSM 1498 / JR1).